Consider the following 856-residue polypeptide: Rab effector MyRIP (856 aa).

The region spanning 4–124 (KLDLSGLTDD…TQSLEWFYNN (121 aa)) is the RabBD domain. The FYVE-type zinc-finger motif lies at 63–105 (CCMRCCSPFTFLVNARRRCGECKFSVCKSCCSYQKHEKLWVCC). Positions 143–560 (RKHRLESGAC…AQVSDNVSET (418 aa)) are myosin-binding. A PRKAR2A-binding region spans residues 193 to 209 (VALRVAEEAIEEAISKA). The segment at 232–248 (LTEELAGTILQRIIRKQ) is negative regulation of PRKAR2A-binding. A disordered region spans residues 252–294 (AELRAEEEEPEWPRSQSGSVKARGEGTTAPPGRHKARATFRRS). Phosphoserine occurs at positions 299 and 351. Disordered regions lie at residues 351 to 578 (SPDG…SVEE), 592 to 625 (SEKETSSGEDQESESKAEPKNQKGSLSSEENNQG), 778 to 806 (RRDQKQRSQVQTIDTSRQQRRKLPAPPVK), and 826 to 856 (LLQGSSTNRPTASTGDTKDLMEPDLESAVMY). Acidic residues predominate over residues 395–405 (IGSDSEEDFDY). Low complexity-rich tracts occupy residues 427-437 (PTQAQSSGQGP) and 450-460 (SDSETSSTSSS). Positions 495 to 856 (FNPQAAGGET…EPDLESAVMY (362 aa)) are actin-binding. 4 stretches are compositionally biased toward polar residues: residues 551–574 (AQVSDNVSETDISNETQNSRSSTD), 613–625 (QKGSLSSEENNQG), 784–793 (RSQVQTIDTS), and 826–840 (LLQGSSTNRPTASTG).

In terms of assembly, binds RAB27A that has been activated by GTP-binding via its N-terminus. Binds MYO5A, MYO7A and F-actin. Interacts with PRKAR2A. Interacts with components of the exocyst complex, including EXOC3 and EXOC4. As to expression, detected in brain, skin, heart, lung, adrenal medulla, pancreas, intestine, liver, kidney, skeletal muscle and testis. Detected in cochlear and vestibular hair cells in the inner ear, and in photoreceptor and pigment epithelium cells in the retina.

The protein localises to the cytoplasm. The protein resides in the perinuclear region. It is found in the cytoplasmic vesicle. It localises to the secretory vesicle. Its subcellular location is the melanosome. Its function is as follows. Rab effector protein involved in melanosome transport. Serves as link between melanosome-bound RAB27A and the motor proteins MYO5A and MYO7A. May link RAB27A-containing vesicles to actin filaments. Functions as a protein kinase A-anchoring protein (AKAP). May act as a scaffolding protein that links PKA to components of the exocytosis machinery, thus facilitating exocytosis, including insulin release. The polypeptide is Rab effector MyRIP (Myrip) (Mus musculus (Mouse)).